Consider the following 219-residue polypeptide: Ribosomal RNA small subunit methyltransferase G (219 aa).

Residues glycine 81, leucine 86, and arginine 150 each coordinate S-adenosyl-L-methionine.

The protein belongs to the methyltransferase superfamily. RNA methyltransferase RsmG family.

It localises to the cytoplasm. It catalyses the reaction guanosine(527) in 16S rRNA + S-adenosyl-L-methionine = N(7)-methylguanosine(527) in 16S rRNA + S-adenosyl-L-homocysteine. Specifically methylates the N7 position of guanine in position 527 of 16S rRNA. This chain is Ribosomal RNA small subunit methyltransferase G, found in Magnetococcus marinus (strain ATCC BAA-1437 / JCM 17883 / MC-1).